We begin with the raw amino-acid sequence, 892 residues long: DNA mismatch repair protein MutS (892 aa).

607-614 (GPNMSGKS) is an ATP binding site.

The protein belongs to the DNA mismatch repair MutS family.

This protein is involved in the repair of mismatches in DNA. It is possible that it carries out the mismatch recognition step. This protein has a weak ATPase activity. The sequence is that of DNA mismatch repair protein MutS from Bacillus cereus (strain G9842).